The primary structure comprises 124 residues: MTRIKNNGISKKKRKRKISKMKGWVGGHSKLFRTGNQQLMKARHYAFYDRKKKKNLNKTLWITRINGGLKYYLTINEKYNIFVSFLRKTKTYVNKKLLSEINVRDSKSFSHLSKPIMKSTGINL.

The protein belongs to the bacterial ribosomal protein bL20 family.

The protein localises to the plastid. It is found in the chloroplast. In terms of biological role, binds directly to 23S ribosomal RNA and is necessary for the in vitro assembly process of the 50S ribosomal subunit. It is not involved in the protein synthesizing functions of that subunit. This Euglena gracilis protein is Large ribosomal subunit protein bL20c (rpl20).